The sequence spans 293 residues: Ribosomal protein L11 methyltransferase (293 aa).

Residues Thr-145, Gly-166, Asp-188, and Asn-230 each coordinate S-adenosyl-L-methionine.

Belongs to the methyltransferase superfamily. PrmA family.

It localises to the cytoplasm. The catalysed reaction is L-lysyl-[protein] + 3 S-adenosyl-L-methionine = N(6),N(6),N(6)-trimethyl-L-lysyl-[protein] + 3 S-adenosyl-L-homocysteine + 3 H(+). In terms of biological role, methylates ribosomal protein L11. The polypeptide is Ribosomal protein L11 methyltransferase (Escherichia coli (strain 55989 / EAEC)).